A 296-amino-acid polypeptide reads, in one-letter code: Sulfate adenylyltransferase subunit 2 (296 aa).

The protein belongs to the PAPS reductase family. CysD subfamily. As to quaternary structure, heterodimer composed of CysD, the smaller subunit, and CysN.

It catalyses the reaction sulfate + ATP + H(+) = adenosine 5'-phosphosulfate + diphosphate. It functions in the pathway sulfur metabolism; hydrogen sulfide biosynthesis; sulfite from sulfate: step 1/3. With CysN forms the ATP sulfurylase (ATPS) that catalyzes the adenylation of sulfate producing adenosine 5'-phosphosulfate (APS) and diphosphate, the first enzymatic step in sulfur assimilation pathway. APS synthesis involves the formation of a high-energy phosphoric-sulfuric acid anhydride bond driven by GTP hydrolysis by CysN coupled to ATP hydrolysis by CysD. This is Sulfate adenylyltransferase subunit 2 from Rhodospirillum rubrum (strain ATCC 11170 / ATH 1.1.1 / DSM 467 / LMG 4362 / NCIMB 8255 / S1).